Consider the following 116-residue polypeptide: Large ribosomal subunit protein bL20c (116 aa).

This sequence belongs to the bacterial ribosomal protein bL20 family.

The protein localises to the plastid. Its subcellular location is the chloroplast. Its function is as follows. Binds directly to 23S ribosomal RNA and is necessary for the in vitro assembly process of the 50S ribosomal subunit. It is not involved in the protein synthesizing functions of that subunit. This Marchantia polymorpha (Common liverwort) protein is Large ribosomal subunit protein bL20c (rpl20).